We begin with the raw amino-acid sequence, 155 residues long: RING finger protein 122 (155 aa).

Residues 40-60 (VIFGTGIFVFMLSLIFCCYFI) traverse the membrane as a helical segment. An RING-type; atypical zinc finger spans residues 93–134 (CAVCLEDFKGKDELGVLPCQHAFHRKCLVKWLEVRCVCPMCN).

Widely expressed in several tissues and cell lines.

It localises to the golgi apparatus. The protein resides in the endoplasmic reticulum. Its subcellular location is the membrane. In terms of biological role, may induce necrosis and apoptosis. May play a role in cell viability. The protein is RING finger protein 122 (RNF122) of Homo sapiens (Human).